Consider the following 438-residue polypeptide: Dihydroorotase (438 aa).

Positions 58 and 60 each coordinate Zn(2+). Substrate-binding positions include 60 to 62 and Asn-92; that span reads HLR. Positions 152, 179, and 232 each coordinate Zn(2+). Residue Asn-278 participates in substrate binding. Asp-305 is a Zn(2+) binding site. Asp-305 is an active-site residue. Substrate contacts are provided by residues His-309 and 323-324; that span reads FG.

It belongs to the metallo-dependent hydrolases superfamily. DHOase family. Class I DHOase subfamily. It depends on Zn(2+) as a cofactor.

The catalysed reaction is (S)-dihydroorotate + H2O = N-carbamoyl-L-aspartate + H(+). The protein operates within pyrimidine metabolism; UMP biosynthesis via de novo pathway; (S)-dihydroorotate from bicarbonate: step 3/3. Its function is as follows. Catalyzes the reversible cyclization of carbamoyl aspartate to dihydroorotate. The chain is Dihydroorotase from Leifsonia xyli subsp. xyli (strain CTCB07).